A 272-amino-acid polypeptide reads, in one-letter code: Shikimate dehydrogenase (NADP(+)) (272 aa).

Residues 14 to 16 (SKS) and threonine 61 each bind shikimate. Lysine 65 acts as the Proton acceptor in catalysis. An NADP(+)-binding site is contributed by glutamate 77. The shikimate site is built by asparagine 86 and aspartate 102. Residues 126–130 (GAGGA), 149–154 (NRTVSR), and methionine 213 contribute to the NADP(+) site. Residue tyrosine 215 coordinates shikimate. NADP(+) is bound at residue glycine 237.

The protein belongs to the shikimate dehydrogenase family. As to quaternary structure, homodimer.

It catalyses the reaction shikimate + NADP(+) = 3-dehydroshikimate + NADPH + H(+). It participates in metabolic intermediate biosynthesis; chorismate biosynthesis; chorismate from D-erythrose 4-phosphate and phosphoenolpyruvate: step 4/7. Its function is as follows. Involved in the biosynthesis of the chorismate, which leads to the biosynthesis of aromatic amino acids. Catalyzes the reversible NADPH linked reduction of 3-dehydroshikimate (DHSA) to yield shikimate (SA). The chain is Shikimate dehydrogenase (NADP(+)) from Escherichia coli (strain SMS-3-5 / SECEC).